The sequence spans 174 residues: Large ribosomal subunit protein uL10 (174 aa).

Belongs to the universal ribosomal protein uL10 family. In terms of assembly, part of the ribosomal stalk of the 50S ribosomal subunit. The N-terminus interacts with L11 and the large rRNA to form the base of the stalk. The C-terminus forms an elongated spine to which L12 dimers bind in a sequential fashion forming a multimeric L10(L12)X complex.

Its function is as follows. Forms part of the ribosomal stalk, playing a central role in the interaction of the ribosome with GTP-bound translation factors. The sequence is that of Large ribosomal subunit protein uL10 from Bordetella petrii (strain ATCC BAA-461 / DSM 12804 / CCUG 43448).